Here is a 428-residue protein sequence, read N- to C-terminus: Elongation factor 1-alpha (428 aa).

The tr-type G domain occupies 5–225; sequence KPVLNVAFIG…DKFQPPEKPT (221 aa). A G1 region spans residues 14 to 21; that stretch reads GHVDAGKS. 14–21 serves as a coordination point for GTP; that stretch reads GHVDAGKS. Mg(2+) is bound at residue Ser21. The interval 70-74 is G2; it reads GVTID. The segment at 91 to 94 is G3; sequence DCPG. Residues 91–95 and 149–152 contribute to the GTP site; these read DCPGH and NKMD. The G4 stretch occupies residues 149–152; that stretch reads NKMD. Positions 189–191 are G5; that stretch reads ASL.

The protein belongs to the TRAFAC class translation factor GTPase superfamily. Classic translation factor GTPase family. EF-Tu/EF-1A subfamily.

It is found in the cytoplasm. The enzyme catalyses GTP + H2O = GDP + phosphate + H(+). Functionally, GTP hydrolase that promotes the GTP-dependent binding of aminoacyl-tRNA to the A-site of ribosomes during protein biosynthesis. The protein is Elongation factor 1-alpha of Methanocaldococcus jannaschii (strain ATCC 43067 / DSM 2661 / JAL-1 / JCM 10045 / NBRC 100440) (Methanococcus jannaschii).